The sequence spans 245 residues: MGRKDKRWVLQRKRDFYYKLAKKLKYRSRASFKLMQLNEKFNVIKPGKIVLDLGCAPGGWMQVAREIVGDKGFVIGIDLQPVKPFEYDNVVAIKGDFTLEENLNKIRELIPNDEKKVDVVISDASPNISGYWDIDHARSIDLVTTALQIATEMLKERGNFVAKVFYGDMIDDYVNLVKKYFEKVYITKPQASRKESAEVYVIAKRYTGKKWEEEDKIKRVKKVENEDNELLAKKIKEIRKLKSKK.

Residues Gly-58, Trp-60, Asp-78, Asp-96, and Asp-123 each coordinate S-adenosyl-L-methionine. The Proton acceptor role is filled by Lys-163.

The protein belongs to the class I-like SAM-binding methyltransferase superfamily. RNA methyltransferase RlmE family.

The protein localises to the cytoplasm. It carries out the reaction uridine(2552) in 23S rRNA + S-adenosyl-L-methionine = 2'-O-methyluridine(2552) in 23S rRNA + S-adenosyl-L-homocysteine + H(+). Functionally, specifically methylates the uridine in position 2552 of 23S rRNA at the 2'-O position of the ribose in the fully assembled 50S ribosomal subunit. This chain is Ribosomal RNA large subunit methyltransferase E, found in Methanocaldococcus jannaschii (strain ATCC 43067 / DSM 2661 / JAL-1 / JCM 10045 / NBRC 100440) (Methanococcus jannaschii).